The primary structure comprises 439 residues: Actin-related protein 3 (439 aa).

Residues 40–71 (PSAGTGGSGSGRPAVANKPSFLTGGAGPGGHL) are disordered.

The protein belongs to the actin family. ARP3 subfamily. As to quaternary structure, component of the Arp2/3 complex composed.

The protein resides in the cytoplasm. The protein localises to the cytoskeleton. In terms of biological role, functions as ATP-binding component of the Arp2/3 complex which is involved in regulation of actin polymerization and together with an activating nucleation-promoting factor (NPF) mediates the formation of branched actin networks. Seems to contact the pointed end of the daughter actin filament. In Neurospora crassa (strain ATCC 24698 / 74-OR23-1A / CBS 708.71 / DSM 1257 / FGSC 987), this protein is Actin-related protein 3 (arp-3).